The sequence spans 742 residues: Phosphoribosylformylglycinamidine synthase subunit PurL (742 aa).

The active site involves His54. The ATP site is built by Tyr57 and Lys96. Glu98 is a Mg(2+) binding site. Residues 99–102 (SHNH) and Arg121 contribute to the substrate site. His100 (proton acceptor) is an active-site residue. Asp122 serves as a coordination point for Mg(2+). Gln245 serves as a coordination point for substrate. Residue Asp273 participates in Mg(2+) binding. 317–319 (ESQ) contacts substrate. ATP-binding residues include Asp500 and Gly537. Asn538 serves as a coordination point for Mg(2+). Substrate is bound at residue Ser540.

Belongs to the FGAMS family. As to quaternary structure, monomer. Part of the FGAM synthase complex composed of 1 PurL, 1 PurQ and 2 PurS subunits.

It localises to the cytoplasm. It catalyses the reaction N(2)-formyl-N(1)-(5-phospho-beta-D-ribosyl)glycinamide + L-glutamine + ATP + H2O = 2-formamido-N(1)-(5-O-phospho-beta-D-ribosyl)acetamidine + L-glutamate + ADP + phosphate + H(+). The protein operates within purine metabolism; IMP biosynthesis via de novo pathway; 5-amino-1-(5-phospho-D-ribosyl)imidazole from N(2)-formyl-N(1)-(5-phospho-D-ribosyl)glycinamide: step 1/2. Part of the phosphoribosylformylglycinamidine synthase complex involved in the purines biosynthetic pathway. Catalyzes the ATP-dependent conversion of formylglycinamide ribonucleotide (FGAR) and glutamine to yield formylglycinamidine ribonucleotide (FGAM) and glutamate. The FGAM synthase complex is composed of three subunits. PurQ produces an ammonia molecule by converting glutamine to glutamate. PurL transfers the ammonia molecule to FGAR to form FGAM in an ATP-dependent manner. PurS interacts with PurQ and PurL and is thought to assist in the transfer of the ammonia molecule from PurQ to PurL. The chain is Phosphoribosylformylglycinamidine synthase subunit PurL from Bacillus velezensis (strain DSM 23117 / BGSC 10A6 / LMG 26770 / FZB42) (Bacillus amyloliquefaciens subsp. plantarum).